The primary structure comprises 102 residues: uncharacterized protein (102 aa).

The chain crosses the membrane as a helical span at residues 5–27 (IYRSNLVIVITLFVSLSYYHTCF).

Its subcellular location is the host membrane. This is an uncharacterized protein from Microplitis demolitor (Parasitoid wasp).